The chain runs to 371 residues: Peptide chain release factor 2 (371 aa).

Gln253 carries the N5-methylglutamine modification.

This sequence belongs to the prokaryotic/mitochondrial release factor family. Methylated by PrmC. Methylation increases the termination efficiency of RF2.

It is found in the cytoplasm. Its function is as follows. Peptide chain release factor 2 directs the termination of translation in response to the peptide chain termination codons UGA and UAA. This is Peptide chain release factor 2 from Mycobacterium sp. (strain JLS).